The sequence spans 181 residues: SecB-like chaperone Rv1957 (181 aa).

Position 2 is an N-acetylthreonine (Thr2).

This sequence belongs to the SecB-like family. Homotetramer, interacts with antitoxin HigA1.

Chaperone component of an atypical, type II toxin-antitoxin chaperone (TAC) system. Prevents antitoxin HigA1 aggregation in vitro at a 1:3 chaperone:antitoxin ratio, probably also protects antitoxin HigA1 from protease. Required for neutralization of toxin HigB1 upon ectopic expression in Mycobacterium marinum or E.coli. When expressed in E.coli complements a secB deletion, restores export of OmpA and MBP and inhibits aggregation of proOmpC although it is less efficient than endogenous SecB. Complements the general chaperone function of E.coli SecB less well. The polypeptide is SecB-like chaperone Rv1957 (secBL) (Mycobacterium tuberculosis (strain ATCC 25618 / H37Rv)).